A 163-amino-acid chain; its full sequence is MPKAPDYSELSDSCTLAGGTARFSGPLHRAWRMMNFRQRMGWIGVGLYLLASAAAFYYVFEINETYNRLALEHIQQHPEEPREGTTWTHSLKARLLSLPFWLWTVIFLIPYLQMFLFLYSCTRADPKTVGYCIIPICLAIICNRHQAFVKASNQISRLQLIDT.

2 consecutive transmembrane segments (helical) span residues 40–60 (MGWI…YYVF) and 100–119 (FWLW…LFLY).

This sequence belongs to the LYSET family. In terms of assembly, interacts with GNPTAB; this interaction is important for proper localization of GNPTAB in Golgi stacks. Interacts with MBTPS1.

It localises to the golgi apparatus membrane. Functionally, required for mannose-6-phosphate-dependent trafficking of lysosomal enzymes. LYSET bridges GlcNAc-1-phosphate transferase (GNPTAB), to the membrane-bound transcription factor site-1 protease (MBTPS1), thus allowing proteolytic activation of the GNPTAB. GNPTAB is involved in the regulation of M6P-dependent Golgi-to-lysosome trafficking of lysosomal enzymes. LYSET is thus an essential factor for maturation and delivery of lysosomal hydrolases. The polypeptide is Lysosomal enzyme trafficking factor (Lyset) (Rattus norvegicus (Rat)).